We begin with the raw amino-acid sequence, 158 residues long: MFRLTSARALFRVANVAARRTYAEAAADALKLNFALPHETLFAGTAVKQVNLPVKTGQIGILANHVPIVEQLVPGVVEVLEGSESKKFFVSGGFATVQPDSTLSITSVEAFPLDSFSAENVRALLAEAQKNAGAADSRVAAEASIQIEVLEALQAALK.

The transit peptide at Met-1–Tyr-22 directs the protein to the mitochondrion.

The protein belongs to the ATPase epsilon chain family. In terms of assembly, F-type ATPases have 2 components, CF(1) - the catalytic core - and CF(0) - the membrane proton channel. CF(1) has five subunits: alpha(3), beta(3), gamma(1), delta(1), epsilon(1). CF(0) has three main subunits: a, b and c.

It is found in the mitochondrion. The protein resides in the mitochondrion inner membrane. In terms of biological role, mitochondrial membrane ATP synthase (F(1)F(0) ATP synthase or Complex V) produces ATP from ADP in the presence of a proton gradient across the membrane which is generated by electron transport complexes of the respiratory chain. F-type ATPases consist of two structural domains, F(1) - containing the extramembraneous catalytic core, and F(0) - containing the membrane proton channel, linked together by a central stalk and a peripheral stalk. During catalysis, ATP turnover in the catalytic domain of F(1) is coupled via a rotary mechanism of the central stalk subunits to proton translocation. Part of the complex F(1) domain and of the central stalk which is part of the complex rotary element. Rotation of the central stalk against the surrounding alpha(3)beta(3) subunits leads to hydrolysis of ATP in three separate catalytic sites on the beta subunits. In Eremothecium gossypii (strain ATCC 10895 / CBS 109.51 / FGSC 9923 / NRRL Y-1056) (Yeast), this protein is ATP synthase subunit delta, mitochondrial (ATP16).